The following is a 679-amino-acid chain: Methionine--tRNA ligase (679 aa).

The 'HIGH' region signature appears at 12–22 (PYANGPIHIGH). Residues Cys-143, Cys-146, Cys-156, and Cys-158 each contribute to the Zn(2+) site. Residues 328–332 (KMSKS) carry the 'KMSKS' region motif. An ATP-binding site is contributed by Lys-331. Residues 537–564 (MMEESKDEAAQETGAAATNPFNDSDQPL) are disordered. The region spanning 577-679 (DFMKVDLRVA…EGALPGQRVH (103 aa)) is the tRNA-binding domain.

It belongs to the class-I aminoacyl-tRNA synthetase family. MetG type 1 subfamily. Homodimer. The cofactor is Zn(2+).

It localises to the cytoplasm. The catalysed reaction is tRNA(Met) + L-methionine + ATP = L-methionyl-tRNA(Met) + AMP + diphosphate. Is required not only for elongation of protein synthesis but also for the initiation of all mRNA translation through initiator tRNA(fMet) aminoacylation. This chain is Methionine--tRNA ligase, found in Rhodopirellula baltica (strain DSM 10527 / NCIMB 13988 / SH1).